Consider the following 336-residue polypeptide: Protein-arginine kinase (336 aa).

Residues 22–245 (IVMSSRIRLA…QQIINEEMQI (224 aa)) form the Phosphagen kinase C-terminal domain. Residues 25-29 (SSRIR), His-83, Arg-116, 167-171 (RASVM), and 198-203 (RGIYGE) contribute to the ATP site.

Belongs to the ATP:guanido phosphotransferase family.

The enzyme catalyses L-arginyl-[protein] + ATP = N(omega)-phospho-L-arginyl-[protein] + ADP + H(+). Functionally, catalyzes the specific phosphorylation of arginine residues in proteins. This is Protein-arginine kinase from Staphylococcus saprophyticus subsp. saprophyticus (strain ATCC 15305 / DSM 20229 / NCIMB 8711 / NCTC 7292 / S-41).